The following is a 478-amino-acid chain: Siroheme synthase (478 aa).

Residues 1–207 (MTANVLFPLF…QRHAEAEAVL (207 aa)) are precorrin-2 dehydrogenase /sirohydrochlorin ferrochelatase. Residues 25 to 26 (KV) and 46 to 47 (PS) contribute to the NAD(+) site. Serine 132 is modified (phosphoserine). The segment at 220-478 (GSVTLVGAGA…PCPPRTHPIS (259 aa)) is uroporphyrinogen-III C-methyltransferase. The Proton acceptor role is filled by aspartate 252. Lysine 274 (proton donor) is an active-site residue. Residues 305-307 (GGD), valine 310, 335-336 (TA), methionine 387, and glycine 416 each bind S-adenosyl-L-methionine.

This sequence in the N-terminal section; belongs to the precorrin-2 dehydrogenase / sirohydrochlorin ferrochelatase family. The protein in the C-terminal section; belongs to the precorrin methyltransferase family.

The enzyme catalyses uroporphyrinogen III + 2 S-adenosyl-L-methionine = precorrin-2 + 2 S-adenosyl-L-homocysteine + H(+). It carries out the reaction precorrin-2 + NAD(+) = sirohydrochlorin + NADH + 2 H(+). The catalysed reaction is siroheme + 2 H(+) = sirohydrochlorin + Fe(2+). Its pathway is cofactor biosynthesis; adenosylcobalamin biosynthesis; precorrin-2 from uroporphyrinogen III: step 1/1. It participates in cofactor biosynthesis; adenosylcobalamin biosynthesis; sirohydrochlorin from precorrin-2: step 1/1. The protein operates within porphyrin-containing compound metabolism; siroheme biosynthesis; precorrin-2 from uroporphyrinogen III: step 1/1. It functions in the pathway porphyrin-containing compound metabolism; siroheme biosynthesis; siroheme from sirohydrochlorin: step 1/1. Its pathway is porphyrin-containing compound metabolism; siroheme biosynthesis; sirohydrochlorin from precorrin-2: step 1/1. Multifunctional enzyme that catalyzes the SAM-dependent methylations of uroporphyrinogen III at position C-2 and C-7 to form precorrin-2 via precorrin-1. Then it catalyzes the NAD-dependent ring dehydrogenation of precorrin-2 to yield sirohydrochlorin. Finally, it catalyzes the ferrochelation of sirohydrochlorin to yield siroheme. This is Siroheme synthase from Xylella fastidiosa (strain M23).